Reading from the N-terminus, the 231-residue chain is 5'-methylthioadenosine/S-adenosylhomocysteine nucleosidase (231 aa).

The active-site Proton acceptor is E12. Residues G78, M153, and 174–175 each bind substrate; that span reads ME. The active-site Proton donor is D198.

Belongs to the PNP/UDP phosphorylase family. MtnN subfamily.

It carries out the reaction S-adenosyl-L-homocysteine + H2O = S-(5-deoxy-D-ribos-5-yl)-L-homocysteine + adenine. It catalyses the reaction S-methyl-5'-thioadenosine + H2O = 5-(methylsulfanyl)-D-ribose + adenine. The catalysed reaction is 5'-deoxyadenosine + H2O = 5-deoxy-D-ribose + adenine. It participates in amino-acid biosynthesis; L-methionine biosynthesis via salvage pathway; S-methyl-5-thio-alpha-D-ribose 1-phosphate from S-methyl-5'-thioadenosine (hydrolase route): step 1/2. Functionally, catalyzes the irreversible cleavage of the glycosidic bond in both 5'-methylthioadenosine (MTA) and S-adenosylhomocysteine (SAH/AdoHcy) to adenine and the corresponding thioribose, 5'-methylthioribose and S-ribosylhomocysteine, respectively. Also cleaves 5'-deoxyadenosine, a toxic by-product of radical S-adenosylmethionine (SAM) enzymes, into 5-deoxyribose and adenine. In Bacillus subtilis (strain 168), this protein is 5'-methylthioadenosine/S-adenosylhomocysteine nucleosidase.